The chain runs to 1589 residues: Polyhomeotic-proximal chromatin protein (1589 aa).

Residues 1–15 (MDRRALKFMQKRADT) show a composition bias toward basic and acidic residues. Disordered regions lie at residues 1-85 (MDRR…GGKQ), 107-174 (KYDV…NCNS), 252-290 (LQQQ…STAI), 1112-1244 (LSTA…STTT), and 1260-1294 (AVST…NGSK). Composition is skewed to low complexity over residues 18 to 28 (DTTTPVSTTAS), 60 to 80 (NHNN…QQQQ), and 119 to 139 (AQQQ…VTPT). A compositionally biased stretch (polar residues) spans 154 to 174 (HTPSTPNRPSAPSTPNTNCNS). The span at 260–271 (NGGGAASAGAGG) shows a compositional bias: gly residues. Low complexity predominate over residues 272–285 (AASPANSQQSQQQQ). S1145 is modified (phosphoserine). Residue T1148 is modified to Phosphothreonine. Positions 1157–1180 (TTPKSSTPATVSASVEASSSTGEA) are enriched in low complexity. Polar residues predominate over residues 1189-1221 (RSSTPSKGATTPTSKQSNAAVQPPSSTTPNSVS). Composition is skewed to low complexity over residues 1230–1244 (TCGS…STTT) and 1260–1290 (AVST…SSIS). Residues 1356–1389 (SAPGSDMVACEQCGKMEHKAKLKRKRYCSPGCSR) form an FCS-type zinc finger. Residues C1365, C1368, C1383, and C1387 each coordinate Zn(2+). Residues 1513–1577 (WSVDDVSNFI…VAKVESIKEV (65 aa)) form the SAM domain.

In terms of assembly, component of PRC1 complex, which contains many PcG proteins like Pc, ph, Scm, Psc, Sce and also chromatin-remodeling proteins such as histone deacetylases. This complex is distinct from the Esc/E(z) complex, at least composed of esc, E(z), Su(z)12, HDAC1/Rpd3 and Caf1-55. The 2 complexes however cooperate and interact together during the first 3 hours of development to establish PcG silencing. Interacts with the SAM domain of Scm via its SAM domain in vitro. Interacts with Trl in vivo and with corto in vitro. In terms of tissue distribution, salivary glands.

The protein localises to the nucleus. Polycomb group (PcG) protein. PcG proteins act by forming multiprotein complexes, which are required to maintain the transcriptionally repressive state of homeotic genes throughout development. PcG proteins are not required to initiate repression, but to maintain it during later stages of development. Component of the PcG multiprotein PRC1 complex, a complex that acts via chromatin remodeling and modification of histones; it mediates monoubiquitination of histone H2A 'Lys-118', rendering chromatin heritably changed in its expressibility. Plays a role in regulating the expression of other pair-rule genes such as eve, ftz, and H. This chain is Polyhomeotic-proximal chromatin protein (ph-p), found in Drosophila melanogaster (Fruit fly).